The sequence spans 534 residues: Arginine--tRNA ligase (534 aa).

The 'HIGH' region signature appears at 120–130 (ANPTGFLHLGH).

Belongs to the class-I aminoacyl-tRNA synthetase family. As to quaternary structure, monomer.

The protein localises to the cytoplasm. The catalysed reaction is tRNA(Arg) + L-arginine + ATP = L-arginyl-tRNA(Arg) + AMP + diphosphate. The sequence is that of Arginine--tRNA ligase from Mesomycoplasma hyopneumoniae (strain J / ATCC 25934 / NCTC 10110) (Mycoplasma hyopneumoniae).